The sequence spans 133 residues: Small ribosomal subunit protein uS11 (133 aa).

Belongs to the universal ribosomal protein uS11 family. As to quaternary structure, part of the 30S ribosomal subunit. Interacts with proteins S7 and S18. Binds to IF-3.

In terms of biological role, located on the platform of the 30S subunit, it bridges several disparate RNA helices of the 16S rRNA. Forms part of the Shine-Dalgarno cleft in the 70S ribosome. This chain is Small ribosomal subunit protein uS11, found in Shouchella clausii (strain KSM-K16) (Alkalihalobacillus clausii).